Here is a 232-residue protein sequence, read N- to C-terminus: MTSHRKHLVRDFNHFITCFVCKGYLIKPTTVTECLHTFCKSCIVQHFEDSNDCPKCGIQVHETNPLEMLRLDNTLEEVIFKLVPGLREKEQQQEDEFWRRKESNDENGPMCKKRRVDEEDDDKGDGDYHRSDPQIAICLDCLRINGQMGENIVKGLMKKFIRCSTRVTVGTIKKFLSLKLKLPSSYELDVLCNGEIMGKDHTMEFIYMTRWRLRGENVYPMVLEYRPRIDFG.

The RING-type zinc finger occupies 18 to 57; it reads CFVCKGYLIKPTTVTECLHTFCKSCIVQHFEDSNDCPKCG. Positions 93-104 are enriched in basic and acidic residues; sequence QEDEFWRRKESN. A disordered region spans residues 93–128; that stretch reads QEDEFWRRKESNDENGPMCKKRRVDEEDDDKGDGDY.

Component of a PRC1-like complex.

Its subcellular location is the nucleus. In terms of biological role, component of Polycomb group (PcG) multiprotein complexes; the complex class is required to maintain the transcriptionally repressive state of some genes. The protein is Polycomb group RING finger protein 5-B (pcgf5b) of Danio rerio (Zebrafish).